A 1663-amino-acid chain; its full sequence is Cortactin-binding protein 2 (1663 aa).

Disordered stretches follow at residues 1–23 (MATD…AGAA), 203–222 (KKKT…RSTE), 367–440 (GASV…LHPG), 454–478 (GNAN…SPTS), and 498–614 (RFTS…LPPK). The stretch at 119–276 (KKMQERMSAQ…EQLKKGSDSK (158 aa)) forms a coiled coil. A compositionally biased stretch (low complexity) spans 386–396 (PSTGSTSDPTS). R498 bears the Asymmetric dimethylarginine mark. Polar residues predominate over residues 583 to 593 (TVASTPSSLPQ). 6 ANK repeats span residues 709–739 (GRPT…DINY), 743–772 (DGHS…QVNA), 776–805 (NGFT…NINH), 809–838 (GGQT…NRSV), 842–871 (DGWT…PAHG), and 912–942 (EGWT…EPER). The disordered stretch occupies residues 1448 to 1483 (KKGESGAWRKVNTSPRRKSGRFSLPTWNKPDLSTEG). Phosphoserine is present on S1524. Positions 1560 to 1663 (DSSGNNPVLS…KNGHLEKPNK (104 aa)) are disordered. Composition is skewed to polar residues over residues 1561 to 1574 (SSGN…TINN) and 1582 to 1599 (KEVS…SNSK). Positions 1624 to 1638 (SQNTKRSSSSSNTRQ) are enriched in low complexity. The span at 1645-1663 (SKEENWNLHKNGHLEKPNK) shows a compositional bias: basic and acidic residues.

Interacts with CTTN/cortactin SH3 domain. Interacts with STRN, STRN4/zinedin and MOB4/phocein; this interactions mediate the association with the STRIPAK core complex and may regulate dendritic spine distribution of the STRIPAK complex in hippocampal neurons. Activation of glutamate receptors weakens the interaction with STRN and STRN4.

Its subcellular location is the cytoplasm. It is found in the cell cortex. The protein resides in the cell projection. It localises to the dendritic spine. Its function is as follows. Regulates the dendritic spine distribution of CTTN/cortactin in hippocampal neurons, and thus controls dendritic spinogenesis and dendritic spine maintenance. Associates with the striatin-interacting phosphatase and kinase (STRIPAK) core complex to regulate dendritic spine distribution of the STRIPAK complex in hippocampal neurons. The protein is Cortactin-binding protein 2 (CTTNBP2) of Gorilla gorilla gorilla (Western lowland gorilla).